The chain runs to 199 residues: Auxin-responsive protein IAA1 (199 aa).

The EAR-like (transcriptional repression) motif lies at 25–29 (LTLRL). Residues 31 to 74 (GSLAAAAAPDPDRKRSSPSSSDAADAADNSSPLAAAADAPPAPK) form a disordered region. Over residues 47–69 (SPSSSDAADAADNSSPLAAAADA) the composition is skewed to low complexity. The region spanning 93–187 (AKFVKVAVDG…TCQRLRLMKS (95 aa)) is the PB1 domain.

Belongs to the Aux/IAA family. As to quaternary structure, homodimers and heterodimers. As to expression, highly expressed in flowers. Expressed at low levels in roots and shoots.

It is found in the nucleus. In terms of biological role, aux/IAA proteins are short-lived transcriptional factors that function as repressors of early auxin response genes at low auxin concentrations. In Oryza sativa subsp. japonica (Rice), this protein is Auxin-responsive protein IAA1 (IAA1).